A 342-amino-acid chain; its full sequence is Nicotinate-nucleotide--dimethylbenzimidazole phosphoribosyltransferase (342 aa).

Glu311 functions as the Proton acceptor in the catalytic mechanism.

The protein belongs to the CobT family.

The catalysed reaction is 5,6-dimethylbenzimidazole + nicotinate beta-D-ribonucleotide = alpha-ribazole 5'-phosphate + nicotinate + H(+). It participates in nucleoside biosynthesis; alpha-ribazole biosynthesis; alpha-ribazole from 5,6-dimethylbenzimidazole: step 1/2. In terms of biological role, catalyzes the synthesis of alpha-ribazole-5'-phosphate from nicotinate mononucleotide (NAMN) and 5,6-dimethylbenzimidazole (DMB). The chain is Nicotinate-nucleotide--dimethylbenzimidazole phosphoribosyltransferase from Vibrio vulnificus (strain CMCP6).